Here is a 514-residue protein sequence, read N- to C-terminus: Peptide chain release factor 3 (514 aa).

The tr-type G domain maps to 8–268; it reads KKRRTFAIIS…IFLKFAPEPH (261 aa). GTP-binding positions include 17 to 24, 85 to 89, and 139 to 142; these read SHPDAGKT, DTPGH, and NKLD.

The protein belongs to the TRAFAC class translation factor GTPase superfamily. Classic translation factor GTPase family. PrfC subfamily.

The protein resides in the cytoplasm. Increases the formation of ribosomal termination complexes and stimulates activities of RF-1 and RF-2. It binds guanine nucleotides and has strong preference for UGA stop codons. It may interact directly with the ribosome. The stimulation of RF-1 and RF-2 is significantly reduced by GTP and GDP, but not by GMP. The chain is Peptide chain release factor 3 from Streptococcus pneumoniae (strain 70585).